The primary structure comprises 667 residues: Receptor for retinol uptake STRA6 (667 aa).

A compositionally biased stretch (polar residues) spans 1–13 (MSSQPAGNQTSPG). The disordered stretch occupies residues 1–20 (MSSQPAGNQTSPGATEDYSY). Topologically, residues 1–50 (MSSQPAGNQTSPGATEDYSYGSWYIDEPQGGEELQPEGEVPSCHTSIPPG) are extracellular. The N-linked (GlcNAc...) asparagine glycan is linked to asparagine 8. Residues 51–71 (LYHACLASLSILVLLLLAMLV) traverse the membrane as a helical segment. Residues 72–100 (RRRQLWPDCVRGRPGLPSPVDFLAGDRPR) lie on the Cytoplasmic side of the membrane. The helical transmembrane segment at 101 to 121 (AVPAAVFMVLLSSLCLLLPDE) threads the bilayer. Residues 122–144 (DALPFLTLASAPSQDGKTEAPRG) are Extracellular-facing. The helical transmembrane segment at 145-165 (AWKILGLFYYAALYYPLAACA) threads the bilayer. Topologically, residues 166–168 (TAG) are cytoplasmic. A helical transmembrane segment spans residues 169–189 (HTAAHLLGSTLSWAHLGVQVW). The Extracellular segment spans residues 190-205 (QRAECPQVPKIYKYYS). A helical transmembrane segment spans residues 206 to 226 (LLASLPLLLGLGFLSLWYPVQ). Residues 227-295 (LVRSFSRRTG…PQPGFHLPLK (69 aa)) are Cytoplasmic-facing. Residues 235–293 (TGAGSKGLQSSYSEEYLRNLLCRKKLGSSYHTSKHGFLSWARVCLRHCIYTPQPGFHLP) are interaction with RBP1. The chain crosses the membrane as a helical span at residues 296–316 (LVLSATLTGTAIYQVALLLLV). Topologically, residues 317–367 (GVVPTIQKVRAGVTTDVSYLLAGFGIVLSEDKQEVVELVKHHLWALEVCYI) are extracellular. A helical membrane pass occupies residues 368–388 (SALVLSCLLTFLVLMRSLVTH). The Cytoplasmic portion of the chain corresponds to 389–422 (RTNLRALHRGAALDLSPLHRSPHPSRQAIFCWMS). A helical membrane pass occupies residues 423–443 (FSAYQTAFICLGLLVQQIIFF). Over 444–473 (LGTTALAFLVLMPVLHGRNLLLFRSLESSW) the chain is Extracellular. Residues 474-494 (PFWLTLALAVILQNMAAHWVF) traverse the membrane as a helical segment. The Cytoplasmic portion of the chain corresponds to 495–509 (LETHDGHPQLTNRRV). The helical intramembrane region spans 510-547 (LYAATFLLFPLNVLVGAMVATWRVLLSALYNAIHLGQM). Over 548 to 667 (DLSLLPPRAA…ALLGANGAQP (120 aa)) the chain is Cytoplasmic. Tyrosine 643 is subject to Phosphotyrosine.

In terms of assembly, homodimer. Interacts with JAK2 and STAT5. Interacts (via extracellular domains) with RBP4. Interacts (via cytoplasmic domains) with RBP1. Post-translationally, phosphorylated on tyrosine residues in response to RBP4 binding. Phosphorylation requires the presence of LRAT, suggesting it may be triggered by the uptake of retinol that is then metabolized within the cell to retinoids that function as signaling molecules. As to expression, broad expression. In adult eye expressed in sclera, retina, retinal pigment epithelium, and trabecular meshwork but not in choroid and iris.

The protein resides in the cell membrane. In terms of biological role, functions as a retinol transporter. Accepts all-trans retinol from the extracellular retinol-binding protein RBP4, facilitates retinol transport across the cell membrane, and then transfers retinol to the cytoplasmic retinol-binding protein RBP1. Retinol uptake is enhanced by LRAT, an enzyme that converts retinol to all-trans retinyl esters, the storage forms of vitamin A. Contributes to the activation of a signaling cascade that depends on retinol transport and LRAT-dependent generation of retinol metabolites that then trigger activation of JAK2 and its target STAT5, and ultimately increase the expression of SOCS3 and inhibit cellular responses to insulin. Important for the homeostasis of vitamin A and its derivatives, such as retinoic acid. STRA6-mediated transport is particularly important in the eye, and under conditions of dietary vitamin A deficiency. Does not transport retinoic acid. In Homo sapiens (Human), this protein is Receptor for retinol uptake STRA6 (STRA6).